The primary structure comprises 135 residues: Large ribosomal subunit protein uL16m (135 aa).

The protein belongs to the universal ribosomal protein uL16 family.

The protein localises to the mitochondrion. The protein is Large ribosomal subunit protein uL16m (RPL16) of Marchantia polymorpha (Common liverwort).